The chain runs to 476 residues: MGRAFVHVILGGGVAAGYAALEFARRGGYSRGELCIISEETVAPYERPALSKGYLLPEGAARLPGFHTCVGANDELLTAKWYKENGIELVLGTKVITADVRMKTLLTATGETISYKNLIIATGARALKLEEFGISGSDASNICYLRNLDDADKLVNVMKSCPGGNAVVIGGGYIGMECAAALVTNRIKVTMVFPESHCMARLFTPKIAEYYENYYTSKGVTFVKGTVLTSFEKDSTGKVTSVILKDGKHLPADMVVVGIGIRASTGLFEGQLLMEQGGIKVNGQMLTSDGSVYAVGDVAAFPIKLFDGVIRRLEHVDSARRTARHAVAAILEPSKTKDIDYLPFFYSRVFTLSWQFYGNNTGEVVHFGDFTNSSPRFGAYWVDKSRIRGAFLEGGSREEYEAISNVVRRKAKVINIAELEKQGLMFAIQESQKDLPDGGLALGEKPTYVWHATAGVIAAASIAAFGYWYGRKRRRW.

Topologically, residues 1–3 (MGR) are cytoplasmic. The chain crosses the membrane as a helical span at residues 4 to 24 (AFVHVILGGGVAAGYAALEFA). Residues 12 to 15 (GGVA), Glu40, Arg47, Lys52, and 146 to 147 (RN) each bind FAD. Residues 25–447 (RRGGYSRGEL…GGLALGEKPT (423 aa)) are Peroxisomal-facing. NAD(+) contacts are provided by residues 171–177 (GGYIGME), Glu195, Arg201, and Gly260. 173–177 (YIGME) is a binding site for NADP(+). 2 residues coordinate NADP(+): Arg201 and Gly260. Asp297 is a binding site for FAD. 314–315 (EH) lines the NAD(+) pocket. 314 to 315 (EH) is an NADP(+) binding site. Val316 serves as a coordination point for FAD. Arg320 contacts L-ascorbate. FAD is bound at residue Tyr346. Tyr346 contributes to the NAD(+) binding site. NADP(+) is bound at residue Tyr346. Residue Arg348 coordinates L-ascorbate. Residues 448–468 (YVWHATAGVIAAASIAAFGYW) form a helical membrane-spanning segment. Over 469-476 (YGRKRRRW) the chain is Cytoplasmic.

This sequence belongs to the FAD-dependent oxidoreductase family. It depends on FAD as a cofactor.

The protein resides in the peroxisome membrane. The enzyme catalyses 2 monodehydro-L-ascorbate radical + NADH + H(+) = 2 L-ascorbate + NAD(+). Its function is as follows. Catalyzes the conversion of monodehydroascorbate to ascorbate, oxidizing NADH in the process. Ascorbate is a major antioxidant against reactive oxygen species (ROS) and nitric oxide (NO). This chain is Monodehydroascorbate reductase 2, peroxisomal, found in Oryza sativa subsp. japonica (Rice).